Reading from the N-terminus, the 120-residue chain is Transcription elongation factor SPT4 (120 aa).

Residues 1–39 form an interaction with spt-5 region; it reads MAASIPSDLRNLRACLLCSLIKSVDAFQTDGCENCDEVL. The C4-type zinc-finger motif lies at 15 to 35; the sequence is CLLCSLIKSVDAFQTDGCENC.

It belongs to the SPT4 family. As to quaternary structure, interacts with spt-5 to form DSIF. DSIF interacts with RNA polymerase II and with the positive transcription elongation factor b complex (P-TEFb complex), which is composed of cdk-9 and cyclin-T.

Its subcellular location is the nucleus. May function as a component of the DRB sensitivity-inducing factor complex (DSIF complex), which regulates transcription elongation by RNA polymerase II. DSIF may enhance transcriptional pausing at sites proximal to the promoter, which may in turn facilitate the assembly of an elongation competent RNA polymerase II complex. This chain is Transcription elongation factor SPT4 (spt-4), found in Caenorhabditis briggsae.